Reading from the N-terminus, the 2387-residue chain is Highly reducing polyketide synthase curS1 (2387 aa).

The region spanning D10–S433 is the Ketosynthase family 3 (KS3) domain. Catalysis depends on for beta-ketoacyl synthase activity residues C182, H316, and H356. The interval F551–G891 is malonyl-CoA:ACP transacylase (MAT) domain. S641 functions as the For malonyltransferase activity in the catalytic mechanism. The interval K940 to T1075 is N-terminal hotdog fold. The PKS/mFAS DH domain occupies K940–E1259. The interval I942–D1256 is dehydratase (DH) domain. H972 (proton acceptor; for dehydratase activity) is an active-site residue. A C-terminal hotdog fold region spans residues S1103–E1259. D1169 serves as the catalytic Proton donor; for dehydratase activity. Positions G1673–L1987 are enoylreductase (ER) domain. The segment at S2011 to D2191 is catalytic ketoreductase (KRc) domain. The Carrier domain maps to E2302–S2379. An O-(pantetheine 4'-phosphoryl)serine modification is found at S2339.

The protein operates within mycotoxin biosynthesis. Highly reducing polyketide synthase; part of the gene cluster that mediates the biosynthesis of 10,11-dehydrocurvularin, a prevalent fungal phytotoxin with heat shock response and immune-modulatory activities. The highly reducing polyketide synthase curS1 is responsible for biosynthesis up to the tetraketide stage. The non-reducing polyketide synthase curS2 then conducts four additional chain extension cycles, producing the unreduced part of the nascent octaketide from C-1 to C-8 in 10,11-dehydrocurvularin. The protein is Highly reducing polyketide synthase curS1 of Aspergillus terreus.